We begin with the raw amino-acid sequence, 183 residues long: GTP cyclohydrolase 1 (183 aa).

Zn(2+) contacts are provided by Cys71, His74, and Cys142.

This sequence belongs to the GTP cyclohydrolase I family. Toroid-shaped homodecamer, composed of two pentamers of five dimers.

The enzyme catalyses GTP + H2O = 7,8-dihydroneopterin 3'-triphosphate + formate + H(+). Its pathway is cofactor biosynthesis; 7,8-dihydroneopterin triphosphate biosynthesis; 7,8-dihydroneopterin triphosphate from GTP: step 1/1. The sequence is that of GTP cyclohydrolase 1 from Leptospira interrogans serogroup Icterohaemorrhagiae serovar copenhageni (strain Fiocruz L1-130).